Here is a 434-residue protein sequence, read N- to C-terminus: Angio-associated migratory cell protein (434 aa).

The interval 1-63 is disordered; it reads MESESESGAA…EEEEEEGNEE (63 aa). Ser20 carries the phosphoserine modification. The span at 39–62 shows a compositional bias: acidic residues; sequence DPDDLAQEMEDVDFEEEEEEEGNE. 8 WD repeats span residues 89–129, 132–171, 173–212, 214–254, 258–299, 315–354, 356–395, and 398–433; these read LHSA…LLFE, GHKD…EVWS, EAGD…KTFQ, PNCP…HVLK, GHQG…GVFR, SESN…LRHQ, QHQS…LLTD, and GHTA…QRPD.

It localises to the cell membrane. The protein localises to the cytoplasm. Plays a role in angiogenesis and cell migration. In smooth muscle cell migration, may act through the RhoA pathway. This chain is Angio-associated migratory cell protein (AAMP), found in Pongo abelii (Sumatran orangutan).